A 436-amino-acid chain; its full sequence is Origin recognition complex subunit 4 (436 aa).

Lys-7 is modified (N6-methyllysine). Gly-67–Thr-74 contributes to the ATP binding site.

This sequence belongs to the ORC4 family. Component of ORC, a complex composed of at least 6 subunits: ORC1, ORC2, ORC3, ORC4, ORC5 and ORC6. ORC is regulated in a cell-cycle dependent manner. It is sequentially assembled at the exit from anaphase of mitosis and disassembled as cells enter S phase. Interacts with DBF4. Interacts with POLQ.

It is found in the nucleus. Functionally, component of the origin recognition complex (ORC) that binds origins of replication. DNA-binding is ATP-dependent. The specific DNA sequences that define origins of replication have not been identified yet. ORC is required to assemble the pre-replication complex necessary to initiate DNA replication. Binds histone H3 and H4 trimethylation marks H3K9me3, H3K27me3 and H4K20me3. The sequence is that of Origin recognition complex subunit 4 (ORC4) from Homo sapiens (Human).